A 383-amino-acid polypeptide reads, in one-letter code: Putative glutamate--cysteine ligase 2-2 (383 aa).

It belongs to the glutamate--cysteine ligase type 2 family. YbdK subfamily.

The catalysed reaction is L-cysteine + L-glutamate + ATP = gamma-L-glutamyl-L-cysteine + ADP + phosphate + H(+). Its function is as follows. ATP-dependent carboxylate-amine ligase which exhibits weak glutamate--cysteine ligase activity. The polypeptide is Putative glutamate--cysteine ligase 2-2 (Legionella pneumophila (strain Paris)).